The primary structure comprises 296 residues: CDP-diacylglycerol--glycerol-3-phosphate 3-phosphatidyltransferase 1, chloroplastic/mitochondrial (296 aa).

The N-terminal 39 residues, 1-39 (MLRSGLASLIVDVNLRRTLRPSPTFSFPAHLSRCIITSR), are a transit peptide targeting the chloroplast and mitochondrion. Low complexity predominate over residues 62–82 (FSSSSSSEQSRPTSSSRNSFS). Residues 62–103 (FSSSSSSEQSRPTSSSRNSFSGHGQLDSDDNSSPPPSQSSSK) form a disordered region. The next 5 membrane-spanning stretches (helical) occupy residues 104–124 (VLTLPTVLTLGRVAAVPLLVA), 126–146 (FYVDSWWGTTATTSIFIAAAI), 164–184 (FGAFLDPVADKLMVAATLILL), 189–209 (IQVAELGPLPWLLTVPSIAII), and 261–281 (VGWLVASGAGLLYVSAGLSVW).

It belongs to the CDP-alcohol phosphatidyltransferase class-I family. The cofactor is Mn(2+).

It localises to the plastid. The protein resides in the chloroplast membrane. It is found in the mitochondrion membrane. It carries out the reaction a CDP-1,2-diacyl-sn-glycerol + sn-glycerol 3-phosphate = a 1,2-diacyl-sn-glycero-3-phospho-(1'-sn-glycero-3'-phosphate) + CMP + H(+). It participates in phospholipid metabolism; phosphatidylglycerol biosynthesis; phosphatidylglycerol from CDP-diacylglycerol: step 1/2. Functionally, catalyzes the committed step to the synthesis of the acidic phospholipids, including phosphatidylglycerol (PG). Transfers specifically a phosphatidyl group from CDP-diacylglycerol to glycerol-3-phosphate to form phosphatidylglycerophosphate. Cannot catalyze the phosphatidyl group transfer to inositol, serine, choline or phosphatidylglycerol. Possesses high activity with CDP-dipalmitoylglycerol and low activity with CDP-dioleoylglycerol. Essential for chloroplast differentiation and PG accumulation in thylakoids, an essential process for the assembly of antenna-reaction center complexes to optimize energy transfer from antenna pigments, and for subsequent photochemical efficiency of photosystem II (PSII). During cold acclimation (at 5 degrees Celsius), necessary for the photosystem I (PSI) photochemistry, including both reaction center and light-harvesting integrity. But dispensable in mitochondrion, being redundant with PGPS2 for the production of PG and its derivative cardiolipin (CL) in mitochondrial membranes. Together with PGPS2, required for the proper embryo development by providing PG accurate levels. The sequence is that of CDP-diacylglycerol--glycerol-3-phosphate 3-phosphatidyltransferase 1, chloroplastic/mitochondrial from Arabidopsis thaliana (Mouse-ear cress).